Here is a 251-residue protein sequence, read N- to C-terminus: uncharacterized protein (251 aa).

Belongs to the FAM243 family.

This is an uncharacterized protein from Mus musculus (Mouse).